We begin with the raw amino-acid sequence, 597 residues long: uncharacterized protein (597 aa).

A PWWP domain is found at 16–78 (VGRLVWVRRR…LENSKTVKAF (63 aa)). 2 disordered regions span residues 126 to 210 (NLCN…MRGL) and 449 to 482 (QLKG…STPH). Basic and acidic residues predominate over residues 134–143 (EDSKRCLSGK). Residues 144–161 (EDEDSGSSDAEETEDDEL) are compositionally biased toward acidic residues. Over residues 166 to 185 (EQLQSSISSQEMNNVGASKV) the composition is skewed to polar residues. Residues 450 to 460 (LKGKRNSRQMS) are compositionally biased toward basic residues. Positions 461–470 (KKQEERRNVY) are enriched in basic and acidic residues.

This is an uncharacterized protein from Arabidopsis thaliana (Mouse-ear cress).